The following is an 872-amino-acid chain: Cilia- and flagella-associated protein 58 (872 aa).

2 coiled-coil regions span residues 106–595 (VDSA…ADGE) and 642–839 (ESQY…QKNK).

It belongs to the CFAP58 family. In terms of assembly, interacts with ODFP2.

The protein localises to the cell projection. The protein resides in the cilium. It is found in the flagellum. It localises to the cytoplasm. Its subcellular location is the cytoskeleton. The protein localises to the microtubule organizing center. The protein resides in the centrosome. Its function is as follows. Has an essential role in the assembly and organization of the sperm flagellar axoneme. Required for the elongation of the primary cilium and sperm flagellar midpiece via modulation of the Notch signaling pathway. The polypeptide is Cilia- and flagella-associated protein 58 (Homo sapiens (Human)).